Consider the following 233-residue polypeptide: Adenylyl cyclase-associated protein 1 (233 aa).

Residue Tyr-14 is modified to Phosphotyrosine. At Ser-17 the chain carries Phosphoserine. Disordered stretches follow at residues 43–71 and 91–129; these read VDKX…PSAL and DEKT…KPVT. The segment covering 53–64 has biased composition (low complexity); that stretch reads LSGLPSGPSAGS. Lys-101 is subject to N6-methyllysine. Phosphoserine occurs at positions 104, 115, 122, and 124. Lys-151 participates in a covalent cross-link: Glycyl lysine isopeptide (Lys-Gly) (interchain with G-Cter in SUMO1). Residues 173–221 enclose the C-CAP/cofactor C-like domain; that stretch reads VPXISINKXDGRHIYLSKNSLDCEIVSAKSSEMNVLIPTEGGDFNEFPV.

The protein belongs to the CAP family. In terms of assembly, homodimer. Binds actin monomers.

The protein localises to the cell membrane. Directly regulates filament dynamics and has been implicated in a number of complex developmental and morphological processes, including mRNA localization and the establishment of cell polarity. The protein is Adenylyl cyclase-associated protein 1 (CAP1) of Sus scrofa (Pig).